Consider the following 310-residue polypeptide: GTPase Era (310 aa).

An Era-type G domain is found at 17–184 (RSGFVALIGA…MDYLAERLPE (168 aa)). The segment at 25 to 32 (GATNAGKS) is G1. 25 to 32 (GATNAGKS) is a binding site for GTP. The G2 stretch occupies residues 51 to 55 (QTTRA). Positions 72–75 (DTPG) are G3. Residues 72–76 (DTPGI) and 134–137 (NKVD) contribute to the GTP site. Residues 134–137 (NKVD) form a G4 region. The G5 stretch occupies residues 163 to 165 (ISA). The region spanning 215–292 (LHQELPYASH…HLFLFVKVRE (78 aa)) is the KH type-2 domain.

It belongs to the TRAFAC class TrmE-Era-EngA-EngB-Septin-like GTPase superfamily. Era GTPase family. Monomer.

It localises to the cytoplasm. It is found in the cell inner membrane. Its function is as follows. An essential GTPase that binds both GDP and GTP, with rapid nucleotide exchange. Plays a role in 16S rRNA processing and 30S ribosomal subunit biogenesis and possibly also in cell cycle regulation and energy metabolism. The polypeptide is GTPase Era (Sinorhizobium medicae (strain WSM419) (Ensifer medicae)).